A 513-amino-acid polypeptide reads, in one-letter code: Mannan endo-1,4-beta-mannosidase A and B (513 aa).

An N-terminal signal peptide occupies residues 1–26; it reads MKVYKKVAFVMAFIMFFSVLPTISMS. Residues 41-353 form the GH26 domain; sequence QTTKNVYSWL…FNDSWVVNRG (313 aa). Position 132 (His132) interacts with substrate. Glu195 (proton donor) is an active-site residue. Residues Trp200 and Tyr270 each coordinate substrate. The active-site Nucleophile is the Glu295. Substrate is bound at residue 429-430; sequence IK.

This sequence belongs to the glycosyl hydrolase 26 family.

The protein resides in the secreted. The enzyme catalyses Random hydrolysis of (1-&gt;4)-beta-D-mannosidic linkages in mannans, galactomannans and glucomannans.. Functionally, could be involved in the degradation of glucomannan and catalyzes the endo hydrolysis of beta-1,4-linked mannan, galactomannan and glucomannan. This chain is Mannan endo-1,4-beta-mannosidase A and B, found in Caldalkalibacillus mannanilyticus (strain DSM 16130 / CIP 109019 / JCM 10596 / AM-001) (Bacillus mannanilyticus).